Consider the following 483-residue polypeptide: Keratin, type II cytoskeletal 7 (483 aa).

Ser-2 bears the N-acetylserine mark. Phosphoserine is present on residues Ser-2, Ser-6, and Ser-7. The interval 2–107 is head; sequence SVQFSSQTFS…DPQIQQVRKE (106 aa). O-linked (GlcNAc) serine glycosylation occurs at Ser-12. The segment at 14-37 is disordered; the sequence is SAAFPRRGGQGRLSSVSSRAGSVS. Dimethylated arginine; alternate is present on Arg-20. Arg-20 is subject to Omega-N-methylarginine; alternate. Over residues 25–37 the composition is skewed to low complexity; sequence RLSSVSSRAGSVS. A phosphoserine mark is found at Ser-63 and Ser-88. A coil 1A region spans residues 107 to 143; that stretch reads EEREQIKTLNNKFASFIDKVRFLEQQNQMLETKWRLL. Residues 108-420 form the IF rod domain; it reads EREQIKTLNN…KLLEGEESRL (313 aa). Thr-114 is modified (phosphothreonine). The tract at residues 144-161 is linker 1; it reads QEQKSSKGSSLPAIFEAH. A Glycyl lysine isopeptide (Lys-Gly) (interchain with G-Cter in SUMO2) cross-link involves residue Lys-147. The segment at 162-253 is coil 1B; that stretch reads IANLRRQLDG…TLYEMELNEL (92 aa). Lys-196 bears the N6-acetyllysine mark. Residues 254–277 form a linker 12 region; it reads QTQISDTSVVLSMDNSRSLDLDSI. Residues Ser-269 and Ser-271 each carry the phosphoserine modification. The tract at residues 278 to 416 is coil 2; the sequence is ISEVKAQYED…ATYRKLLEGE (139 aa). Glycyl lysine isopeptide (Lys-Gly) (interchain with G-Cter in SUMO2) cross-links involve residues Lys-282 and Lys-303. Thr-306 is modified (phosphothreonine). Residues Lys-313 and Lys-348 each participate in a glycyl lysine isopeptide (Lys-Gly) (interchain with G-Cter in SUMO2) cross-link. The interval 417–483 is tail; that stretch reads ESRLSGDGVG…TSSSRRSVRN (67 aa).

This sequence belongs to the intermediate filament family. As to quaternary structure, heterotetramer of two type I and two type II keratins. Interacts with eukaryotic translation initiator factor 3 (eIF3) subunit EIF3S10. Interacts with GPER1. Post-translationally, arg-20 is dimethylated, probably to asymmetric dimethylarginine.

In terms of biological role, blocks interferon-dependent interphase and stimulates DNA synthesis in cells. This Potorous tridactylus (Potoroo) protein is Keratin, type II cytoskeletal 7.